The primary structure comprises 476 residues: Probable cytosolic Fe-S cluster assembly factor GH10760 (476 aa).

Residues Cys23, Cys68, Cys71, Cys74, Cys187, Cys243, Cys395, and Cys399 each coordinate [4Fe-4S] cluster.

Belongs to the NARF family.

Component of the cytosolic iron-sulfur (Fe/S) protein assembly machinery. Required for maturation of extramitochondrial Fe/S proteins. The polypeptide is Probable cytosolic Fe-S cluster assembly factor GH10760 (Drosophila grimshawi (Hawaiian fruit fly)).